The primary structure comprises 170 residues: Ureidoglycolate lyase (170 aa).

Belongs to the ureidoglycolate lyase family. In terms of assembly, homodimer. The cofactor is Ni(2+).

The enzyme catalyses (S)-ureidoglycolate = urea + glyoxylate. It participates in nitrogen metabolism; (S)-allantoin degradation. In terms of biological role, catalyzes the catabolism of the allantoin degradation intermediate (S)-ureidoglycolate, generating urea and glyoxylate. Involved in the utilization of allantoin as nitrogen source. This is Ureidoglycolate lyase from Stutzerimonas stutzeri (strain A1501) (Pseudomonas stutzeri).